We begin with the raw amino-acid sequence, 127 residues long: Ribonuclease P protein component (127 aa).

It belongs to the RnpA family. In terms of assembly, consists of a catalytic RNA component (M1 or rnpB) and a protein subunit.

The catalysed reaction is Endonucleolytic cleavage of RNA, removing 5'-extranucleotides from tRNA precursor.. Its function is as follows. RNaseP catalyzes the removal of the 5'-leader sequence from pre-tRNA to produce the mature 5'-terminus. It can also cleave other RNA substrates such as 4.5S RNA. The protein component plays an auxiliary but essential role in vivo by binding to the 5'-leader sequence and broadening the substrate specificity of the ribozyme. The sequence is that of Ribonuclease P protein component from Agrobacterium fabrum (strain C58 / ATCC 33970) (Agrobacterium tumefaciens (strain C58)).